The chain runs to 679 residues: Enzymatic polyprotein (679 aa).

Positions 40–130 (LHCFVDTGAS…LYEPFIQFTD (91 aa)) are protease. Asp45 is a catalytic residue. The Reverse transcriptase domain maps to 272–452 (LKVIKPSKSP…KKINFLGLEI (181 aa)).

The protein belongs to the caulimoviridae enzymatic polyprotein family.

The catalysed reaction is DNA(n) + a 2'-deoxyribonucleoside 5'-triphosphate = DNA(n+1) + diphosphate. In terms of biological role, encodes for at least two polypeptides: protease (PR) and reverse transcriptase (RT). The protease processes the polyprotein in cis. Reverse transcriptase is multifunctional enzyme that converts the viral RNA genome into dsDNA in viral cytoplasmic capsids. This enzyme displays a DNA polymerase activity that can copy either DNA or RNA templates, and a ribonuclease H (RNase H) activity that cleaves the RNA strand of RNA-DNA heteroduplexes in a partially processive 3'- to 5'-endonucleasic mode. Neo-synthesized pregenomic RNA (pgRNA) are encapsidated, and reverse-transcribed inside the nucleocapsid. Partial (+)DNA is synthesized from the (-)DNA template and generates the relaxed circular DNA (RC-DNA) genome. After budding and infection, the RC-DNA migrates in the nucleus, and is converted into a plasmid-like covalently closed circular DNA (cccDNA). The sequence is that of Enzymatic polyprotein from Cauliflower mosaic virus (strain BBC) (CaMV).